The sequence spans 80 residues: Small ribosomal subunit protein bS18 (80 aa).

The protein belongs to the bacterial ribosomal protein bS18 family. In terms of assembly, part of the 30S ribosomal subunit. Forms a tight heterodimer with protein bS6.

Its function is as follows. Binds as a heterodimer with protein bS6 to the central domain of the 16S rRNA, where it helps stabilize the platform of the 30S subunit. This is Small ribosomal subunit protein bS18 from Staphylococcus aureus (strain Mu3 / ATCC 700698).